The chain runs to 739 residues: Phosphoribosylformylglycinamidine synthase subunit PurL (739 aa).

H52 is an active-site residue. 2 residues coordinate ATP: Y55 and K94. E96 lines the Mg(2+) pocket. Residues 97-100 (SHNH) and R119 each bind substrate. The active-site Proton acceptor is H98. D120 is a binding site for Mg(2+). Position 243 (Q243) interacts with substrate. Residue D273 coordinates Mg(2+). 317 to 319 (ESQ) is a substrate binding site. ATP is bound by residues D500 and G537. Residue N538 coordinates Mg(2+). S540 provides a ligand contact to substrate.

It belongs to the FGAMS family. Monomer. Part of the FGAM synthase complex composed of 1 PurL, 1 PurQ and 2 PurS subunits.

The protein localises to the cytoplasm. It catalyses the reaction N(2)-formyl-N(1)-(5-phospho-beta-D-ribosyl)glycinamide + L-glutamine + ATP + H2O = 2-formamido-N(1)-(5-O-phospho-beta-D-ribosyl)acetamidine + L-glutamate + ADP + phosphate + H(+). Its pathway is purine metabolism; IMP biosynthesis via de novo pathway; 5-amino-1-(5-phospho-D-ribosyl)imidazole from N(2)-formyl-N(1)-(5-phospho-D-ribosyl)glycinamide: step 1/2. Part of the phosphoribosylformylglycinamidine synthase complex involved in the purines biosynthetic pathway. Catalyzes the ATP-dependent conversion of formylglycinamide ribonucleotide (FGAR) and glutamine to yield formylglycinamidine ribonucleotide (FGAM) and glutamate. The FGAM synthase complex is composed of three subunits. PurQ produces an ammonia molecule by converting glutamine to glutamate. PurL transfers the ammonia molecule to FGAR to form FGAM in an ATP-dependent manner. PurS interacts with PurQ and PurL and is thought to assist in the transfer of the ammonia molecule from PurQ to PurL. In Enterococcus faecalis (strain ATCC 700802 / V583), this protein is Phosphoribosylformylglycinamidine synthase subunit PurL.